Here is a 499-residue protein sequence, read N- to C-terminus: Replication factor C large subunit (499 aa).

50–57 (GPPGVGKT) lines the ATP pocket. The segment at 428–499 (EAERRVEAAE…QATLFDFLKK (72 aa)) is disordered. Acidic residues predominate over residues 436–472 (AEEEETMEAGEPEEELEEVEEEELTEEELEEAEEEIE). The segment covering 473–484 (TVGKKEKPEKEK) has biased composition (basic and acidic residues).

Belongs to the activator 1 small subunits family. RfcL subfamily. As to quaternary structure, heteromultimer composed of small subunits (RfcS) and large subunits (RfcL).

In terms of biological role, part of the RFC clamp loader complex which loads the PCNA sliding clamp onto DNA. The protein is Replication factor C large subunit of Thermococcus kodakarensis (strain ATCC BAA-918 / JCM 12380 / KOD1) (Pyrococcus kodakaraensis (strain KOD1)).